The primary structure comprises 4377 residues: Ankyrin-3 (4377 aa).

Residues 1 to 44 (MAHAASQLKKNRDLEINAEEEPEKKRKHRKRSRDRKKKSDANAS) form a disordered region. A compositionally biased stretch (basic residues) spans 25–38 (KRKHRKRSRDRKKK). A Phosphoserine modification is found at serine 39. ANK repeat units lie at residues 73–102 (NGLN…NVDA), 106–135 (KGNT…NVNA), 139–168 (NGFT…SQSL), 172–201 (DGFT…KGKV), 203–230 (LPAL…NADV), 234–263 (SGFT…AVDF), 267–296 (NDIT…KIDA), 300–329 (DGLT…PILS), 333–362 (NGLS…PVDD), 366–395 (DYLT…NPNA), 399–428 (NGFT…SIQA), 432–461 (SGLT…SPNT), 465–494 (RGET…QVEA), 498–527 (DDQT…SPNA), 531–560 (SGYT…SLSI), 564–593 (KGFT…SPDA), 597–626 (SGLT…SPHA), 630–659 (NGYT…DANA), 663–692 (QGIA…NVNL), 696–725 (SGLT…HVDA), 729–758 (MGYT…KVNA), 762–791 (NGYT…SPNE), and 795–825 (NGNT…TMTT). The residue at position 468 (threonine 468) is a Phosphoserine. Serine 623 carries the phosphoserine modification. 2 positions are modified to phosphoserine: threonine 765 and glutamate 791. 9 positions are modified to phosphoserine: serine 847, serine 861, serine 867, serine 913, serine 916, serine 922, serine 957, serine 959, and serine 1113. 2 ZU5 domains span residues 984-1139 (FLVS…VVSR) and 1141-1288 (KQES…LADC). The interval 1273-1407 (VSFTTNVSAR…SIKIRDTSQE (135 aa)) is UPA domain. A phosphoserine mark is found at serine 1445, serine 1459, and serine 1470. Residues 1519–1539 (SGFTSLSSSSSNTPSASPLKS) show a composition bias toward low complexity. Residues 1519-1540 (SGFTSLSSSSSNTPSASPLKSI) form a disordered region. A phosphoserine mark is found at serine 1622, serine 1625, serine 1632, isoleucine 1651, leucine 1658, serine 1984, serine 2111, serine 2123, and serine 2126. 15 disordered regions span residues 1968–1987 (VDNK…SPED), 2107–2159 (TILE…VPIP), 2176–2245 (YDPS…EETH), 2299–2322 (AVSP…DNQM), 2383–2433 (FPCS…ISDD), 2474–2508 (DVSH…KIAT), 2588–2751 (LTEV…VKKI), 2795–2824 (QSNE…MPDS), 3036–3067 (PPLE…DVFD), 3131–3272 (TFYT…KKHH), 3298–3516 (PVIR…SVFP), 3538–3607 (KGLD…HEGK), 3635–3718 (GEHT…DPKL), 3868–3897 (KATS…QSEK), and 4019–4090 (KKMQ…CERT). The segment covering 1977–1986 (PKSDKGHSPE) has biased composition (basic and acidic residues). Basic and acidic residues predominate over residues 2115 to 2136 (FSQHDQDKSPLSDSGFETRSEK). The span at 2137–2146 (TPSAPQSAES) shows a compositional bias: polar residues. The span at 2299-2308 (AVSPDVHKSA) shows a compositional bias: basic and acidic residues. Positions 2390–2399 (GQQEEEELTA) are enriched in acidic residues. Positions 2407–2417 (LESSRVNTPVS) are enriched in polar residues. Basic and acidic residues-rich tracts occupy residues 2497 to 2508 (GSDKRSREKIAT) and 2588 to 2612 (LTEV…PEKK). Positions 2622–2631 (SSQSPTSSSP) are enriched in low complexity. Residues 2706–2716 (SGFQLKQSKLS) are compositionally biased toward polar residues. Residues 2720–2742 (LKFEQGTHAKSKDMSQEDRKSDG) show a composition bias toward basic and acidic residues. The segment covering 2796–2807 (SNEIVVNDSGSD) has biased composition (polar residues). Composition is skewed to polar residues over residues 3154-3186 (EQVS…SKTP) and 3214-3224 (KSTSLKQTTVE). Basic and acidic residues-rich tracts occupy residues 3227–3242 (AVER…DSNQ) and 3335–3361 (KLKE…KELE). Over residues 3377–3402 (SPQNEIAQNGNNDQSITECSIATTAE) the composition is skewed to polar residues. The segment covering 3409–3428 (ATEIDSLDGYDLQDEDDGLT) has biased composition (acidic residues). Composition is skewed to basic and acidic residues over residues 3465-3481 (EVIE…DKPP) and 3549-3575 (RGDD…EDRS). A compositionally biased stretch (low complexity) spans 3576–3598 (PATTPDTTPARTPTDESTPTSEP). Residues 3637–3651 (HTSEGKSGDQGEGDK) show a composition bias toward basic and acidic residues. Polar residues-rich tracts occupy residues 3654-3669 (VTAT…TVET), 3676-3713 (ETPT…NTSK), 3880-3897 (HMSN…QSEK), and 4033-4052 (SRNT…VTTK). Basic and acidic residues predominate over residues 4053-4076 (SARDKKTEAAPLKSKSEKAGSEKR). The 85-residue stretch at 4090–4174 (TDIRMAIVAD…DIVTLLEGPI (85 aa)) folds into the Death domain. 2 positions are modified to phosphoserine: serine 4211 and serine 4229. Disordered regions lie at residues 4251-4298 (NGSH…EPAS) and 4323-4377 (PVSM…KSHS). Residues 4268–4277 (PESQNDVGKQ) show a composition bias toward polar residues. Serine 4290 and serine 4298 each carry phosphoserine. Residues 4337–4347 (GKPRLSLHEEE) are compositionally biased toward basic and acidic residues. Serine 4350 is subject to Phosphoserine. Residues 4362–4377 (VKTKKEIRHVEKKSHS) are compositionally biased toward basic residues.

Directly interacts with DMD and betaDAG1. This interaction does not interfere with binding between DMD and betaDAG1. It is also required for DMD and betaDAG1 retention at costameres. Interacts (via N-terminal ANK repeats) with SCHIP1 isoform 5 (via C-terminus); this interaction is required for the localization at axon initial segments (AISs) and nodes of Ranvier (NRs). May be a constituent of a NFASC/NRCAM/ankyrin G complex. Interacts with RHBG. Interacts with PLEC and FLNC. Interacts with KCNA1; this inhibits channel activity. Interacts (via ANK repeats) with IQCJ-SCHIP1; required for IQCJ-SCHIP1 localization at axon initial segments (AIS) and nodes of Ranvier. Interacts with SCHIP1. Interacts with SCN5A. Interacts with PKP2 and GJA1/CX43. Expressed in brain, neurons, muscles and other tissues.

It is found in the cytoplasm. It localises to the cytoskeleton. The protein localises to the cell projection. Its subcellular location is the axon. The protein resides in the cell membrane. It is found in the sarcolemma. It localises to the postsynaptic cell membrane. The protein localises to the lysosome. Its subcellular location is the T-tubule. The protein resides in the golgi apparatus. Its function is as follows. Membrane-cytoskeleton linker. May participate in the maintenance/targeting of ion channels and cell adhesion molecules at the nodes of Ranvier and axonal initial segments. In skeletal muscle, required for costamere localization of DMD and betaDAG1. Regulates KCNA1 channel activity in function of dietary Mg(2+) levels, and thereby contributes to the regulation of renal Mg(2+) reabsorption. Required for intracellular adhesion and junctional conductance in myocytes, potentially via stabilization of GJA1/CX43 protein abundance and promotion of PKP2, GJA1/CX43, and SCN5A/Nav1.5 localization to cell-cell junctions. May be part of a Golgi-specific membrane cytoskeleton in association with beta-spectrin. This Homo sapiens (Human) protein is Ankyrin-3.